The sequence spans 117 residues: MNFGLRLIFLVLTLKGVKCEVQLVESGGGLVKPGGSLKLSCAASGFAFSSYDMSWVRQTPEKRLEWVAYISSGGGSTYYPDTVKGRFTISRDNAKNTLYLQMSSLKSEDTAMYYCAR.

Residues 1–19 (MNFGLRLIFLVLTLKGVKC) form the signal peptide. Positions 20–49 (EVQLVESGGGLVKPGGSLKLSCAASGFAFS) are framework-1. Cys41 and Cys115 are oxidised to a cystine. The tract at residues 50 to 54 (SYDMS) is complementarity-determining-1. A framework-2 region spans residues 55 to 68 (WVRQTPEKRLEWVA). The complementarity-determining-2 stretch occupies residues 69–85 (YISSGGGSTYYPDTVKG). A framework-3 region spans residues 86–117 (RFTISRDNAKNTLYLQMSSLKSEDTAMYYCAR).

This chain is Ig heavy chain V region 345, found in Mus musculus (Mouse).